A 436-amino-acid polypeptide reads, in one-letter code: Suppressor of cytokine signaling 4 (436 aa).

A disordered region spans residues 1–25 (MAENNSKNVDVRPKTSRSRSADRKD). Residues 9–25 (VDVRPKTSRSRSADRKD) show a composition bias toward basic and acidic residues. Residues 283 to 378 (CYWGVMDKYA…FFEPLLSTPL (96 aa)) enclose the SH2 domain. An SOCS box domain is found at 373 to 422 (LLSTPLIRTFPFSLQHICRTVICNCTTYDGIDALPIPSPMKLYLKEYHYK).

It functions in the pathway protein modification; protein ubiquitination. SOCS family proteins form part of a classical negative feedback system that regulates cytokine signal transduction. Substrate-recognition component of a SCF-like ECS (Elongin BC-CUL2/5-SOCS-box protein) E3 ubiquitin-protein ligase complex which mediates the ubiquitination and subsequent proteasomal degradation of target proteins. Inhibits EGF signaling by mediating the degradation of the Tyr-phosphorylated EGF receptor/EGFR. The polypeptide is Suppressor of cytokine signaling 4 (Socs4) (Mus musculus (Mouse)).